Here is a 304-residue protein sequence, read N- to C-terminus: Quinolinate synthase (304 aa).

Positions 24 and 41 each coordinate iminosuccinate. Position 86 (C86) interacts with [4Fe-4S] cluster. Iminosuccinate contacts are provided by residues 112 to 114 and S129; that span reads YVN. C171 is a binding site for [4Fe-4S] cluster. Residues 197 to 199 and T214 contribute to the iminosuccinate site; that span reads HPE. C259 serves as a coordination point for [4Fe-4S] cluster.

Belongs to the quinolinate synthase family. Type 2 subfamily. The cofactor is [4Fe-4S] cluster.

Its subcellular location is the cytoplasm. The enzyme catalyses iminosuccinate + dihydroxyacetone phosphate = quinolinate + phosphate + 2 H2O + H(+). It participates in cofactor biosynthesis; NAD(+) biosynthesis; quinolinate from iminoaspartate: step 1/1. In terms of biological role, catalyzes the condensation of iminoaspartate with dihydroxyacetone phosphate to form quinolinate. This chain is Quinolinate synthase, found in Geobacter metallireducens (strain ATCC 53774 / DSM 7210 / GS-15).